A 204-amino-acid polypeptide reads, in one-letter code: Guanylate kinase (204 aa).

One can recognise a Guanylate kinase-like domain in the interval 5–184; it reads GLLLVLSGPS…AVDHIKAIVD (180 aa). 12 to 19 lines the ATP pocket; sequence GPSGVGKG.

This sequence belongs to the guanylate kinase family.

Its subcellular location is the cytoplasm. It catalyses the reaction GMP + ATP = GDP + ADP. Its function is as follows. Essential for recycling GMP and indirectly, cGMP. This Lactobacillus acidophilus (strain ATCC 700396 / NCK56 / N2 / NCFM) protein is Guanylate kinase.